Consider the following 309-residue polypeptide: Porphobilinogen deaminase (309 aa).

At cysteine 244 the chain carries S-(dipyrrolylmethanemethyl)cysteine.

The protein belongs to the HMBS family. In terms of assembly, monomer. Requires dipyrromethane as cofactor.

The catalysed reaction is 4 porphobilinogen + H2O = hydroxymethylbilane + 4 NH4(+). The protein operates within porphyrin-containing compound metabolism; protoporphyrin-IX biosynthesis; coproporphyrinogen-III from 5-aminolevulinate: step 2/4. In terms of biological role, tetrapolymerization of the monopyrrole PBG into the hydroxymethylbilane pre-uroporphyrinogen in several discrete steps. This is Porphobilinogen deaminase from Listeria welshimeri serovar 6b (strain ATCC 35897 / DSM 20650 / CCUG 15529 / CIP 8149 / NCTC 11857 / SLCC 5334 / V8).